The chain runs to 406 residues: Peptidase T (406 aa).

H80 is a Zn(2+) binding site. D82 is an active-site residue. D141 is a binding site for Zn(2+). E175 (proton acceptor) is an active-site residue. E176, D198, and H380 together coordinate Zn(2+).

It belongs to the peptidase M20B family. Requires Zn(2+) as cofactor.

The protein resides in the cytoplasm. It carries out the reaction Release of the N-terminal residue from a tripeptide.. In terms of biological role, cleaves the N-terminal amino acid of tripeptides. In Streptococcus mutans serotype c (strain ATCC 700610 / UA159), this protein is Peptidase T.